Here is a 122-residue protein sequence, read N- to C-terminus: Glycine cleavage system H protein (122 aa).

In terms of domain architecture, Lipoyl-binding spans 19–101 (VATVGITDYA…QGKAWFFKIK (83 aa)). K60 carries the post-translational modification N6-lipoyllysine.

The protein belongs to the GcvH family. As to quaternary structure, the glycine cleavage system is composed of four proteins: P, T, L and H. (R)-lipoate is required as a cofactor.

Functionally, the glycine cleavage system catalyzes the degradation of glycine. The H protein shuttles the methylamine group of glycine from the P protein to the T protein. In Bradyrhizobium diazoefficiens (strain JCM 10833 / BCRC 13528 / IAM 13628 / NBRC 14792 / USDA 110), this protein is Glycine cleavage system H protein.